The following is a 1349-amino-acid chain: ABC multidrug transporter G (1349 aa).

Residues Arg-51–Lys-299 enclose the ABC transporter 1 domain. Asn-144 carries N-linked (GlcNAc...) asparagine glycosylation. 4 helical membrane passes run Leu-407 to Phe-427, Ser-436 to Met-456, Ile-492 to Leu-512, and Trp-523 to Leu-543. Asn-549 is a glycosylation site (N-linked (GlcNAc...) asparagine). A run of 2 helical transmembrane segments spans residues Ala-550–Pro-570 and Trp-580–Val-600. Asn-649 is a glycosylation site (N-linked (GlcNAc...) asparagine). Residues Phe-659 to Leu-679 traverse the membrane as a helical segment. The 243-residue stretch at Phe-721 to Ala-963 folds into the ABC transporter 2 domain. Residue Gly-757 to Thr-764 coordinates ATP. Asn-994 carries an N-linked (GlcNAc...) asparagine glycan. Helical transmembrane passes span Val-1056–Gly-1076, Phe-1085–Phe-1105, Ile-1121–Ala-1143, Met-1166–Ala-1186, Phe-1193–Val-1213, and Trp-1226–Trp-1246. A glycan (N-linked (GlcNAc...) asparagine) is linked at Asn-1287. A helical transmembrane segment spans residues Thr-1318–Leu-1338.

It belongs to the ABC transporter superfamily. ABCG family. PDR (TC 3.A.1.205) subfamily.

It is found in the cell membrane. Its function is as follows. ABC efflux transporter that seems not to be able to transport azoles, nor rhodamine 6G (R-6G), a known substrate for many ABC transporters. The polypeptide is ABC multidrug transporter G (Aspergillus fumigatus (strain ATCC MYA-4609 / CBS 101355 / FGSC A1100 / Af293) (Neosartorya fumigata)).